A 411-amino-acid polypeptide reads, in one-letter code: Glucose-1-phosphate adenylyltransferase (411 aa).

Residues Gly-161, 176 to 177 (EK), and Ser-195 each bind alpha-D-glucose 1-phosphate.

The protein belongs to the bacterial/plant glucose-1-phosphate adenylyltransferase family. Homotetramer.

The catalysed reaction is alpha-D-glucose 1-phosphate + ATP + H(+) = ADP-alpha-D-glucose + diphosphate. The protein operates within glycan biosynthesis; glycogen biosynthesis. In terms of biological role, involved in the biosynthesis of ADP-glucose, a building block required for the elongation reactions to produce glycogen. Catalyzes the reaction between ATP and alpha-D-glucose 1-phosphate (G1P) to produce pyrophosphate and ADP-Glc. This chain is Glucose-1-phosphate adenylyltransferase, found in Anaeromyxobacter sp. (strain Fw109-5).